We begin with the raw amino-acid sequence, 318 residues long: Cytosolic Fe-S cluster assembly factor Nubp1 homolog (318 aa).

A compositionally biased stretch (basic and acidic residues) spans 1-15 (MSAPEVENKPADAPE). The tract at residues 1–29 (MSAPEVENKPADAPEHCPGTESENAGKAS) is disordered. [4Fe-4S] cluster is bound by residues cysteine 17, cysteine 31, cysteine 34, and cysteine 40. An ATP-binding site is contributed by 70–77 (GKGGVGKS). Cysteine 245 and cysteine 248 together coordinate [4Fe-4S] cluster.

The protein belongs to the Mrp/NBP35 ATP-binding proteins family. NUBP1/NBP35 subfamily. Heterotetramer of 2 Nubp1 and 2 Nubp2 chains. [4Fe-4S] cluster is required as a cofactor.

It is found in the cytoplasm. Its function is as follows. Component of the cytosolic iron-sulfur (Fe/S) protein assembly (CIA) machinery. Required for maturation of extramitochondrial Fe-S proteins. The Nubp1-Nubp2 heterotetramer forms a Fe-S scaffold complex, mediating the de novo assembly of an Fe-S cluster and its transfer to target apoproteins. This Aedes aegypti (Yellowfever mosquito) protein is Cytosolic Fe-S cluster assembly factor Nubp1 homolog.